The following is a 244-amino-acid chain: MKSLWLDIGNTRLKYWITENQQIIEHAAELHLQSPADLLLGLIQHFKHQGLHRIGISSVLDTENNQRIQQILKWLEIPVVFAKVHAEYAGLQCGYEVPSQLGIDRWLQVLAVAEEKENYCIIGCGTALTIDLTKGKQHLGGYILPNLYLQRDALIQNTKGIKIPDSAFDNLNPGNNTVDAVHHGILLGLISTIESIMQQSPKKLLLTGGDAKLFAKFLQKYDPVVETDLLLKGLQQYIAHYPKD.

An ATP-binding site is contributed by 7-14 (DIGNTRLK). Substrate contacts are provided by residues Y95 and 102 to 105 (GIDR). Residue D104 is the Proton acceptor of the active site. T126 is an ATP binding site. T177 serves as a coordination point for substrate.

The protein belongs to the type III pantothenate kinase family. Homodimer. It depends on NH4(+) as a cofactor. K(+) serves as cofactor.

The protein resides in the cytoplasm. The catalysed reaction is (R)-pantothenate + ATP = (R)-4'-phosphopantothenate + ADP + H(+). The protein operates within cofactor biosynthesis; coenzyme A biosynthesis; CoA from (R)-pantothenate: step 1/5. Functionally, catalyzes the phosphorylation of pantothenate (Pan), the first step in CoA biosynthesis. This chain is Type III pantothenate kinase, found in Acinetobacter baumannii (strain ACICU).